The chain runs to 295 residues: DegV domain-containing protein MG326 (295 aa).

A DegV domain is found at 4–292 (TAIITDSTAS…IDAFSISLLI (289 aa)). Positions 63 and 95 each coordinate hexadecanoate.

In terms of biological role, may bind long-chain fatty acids, such as palmitate, and may play a role in lipid transport or fatty acid metabolism. The chain is DegV domain-containing protein MG326 from Mycoplasma genitalium (strain ATCC 33530 / DSM 19775 / NCTC 10195 / G37) (Mycoplasmoides genitalium).